The sequence spans 284 residues: RNase adapter protein RapZ (284 aa).

Residue 8 to 15 coordinates ATP; the sequence is GRSGSGKS. 56 to 59 contacts GTP; sequence DVRN. The segment at 266–284 is RNA-binding; it reads RSRGKNVQSRHRTLEKRKP.

This sequence belongs to the RapZ-like family. RapZ subfamily. In terms of assembly, homotrimer.

In terms of biological role, modulates the synthesis of GlmS, by affecting the processing and stability of the regulatory small RNA GlmZ. When glucosamine-6-phosphate (GlcN6P) concentrations are high in the cell, RapZ binds GlmZ and targets it to cleavage by RNase E. Consequently, GlmZ is inactivated and unable to activate GlmS synthesis. Under low GlcN6P concentrations, RapZ is sequestered and inactivated by an other regulatory small RNA, GlmY, preventing GlmZ degradation and leading to synthesis of GlmS. This chain is RNase adapter protein RapZ, found in Escherichia coli O1:K1 / APEC.